Here is a 609-residue protein sequence, read N- to C-terminus: Tyrosyl-DNA phosphodiesterase 1 (609 aa).

A compositionally biased stretch (polar residues) spans 1–12; it reads MSQESSYGKWTI. Residues 1 to 154 are disordered; it reads MSQESSYGKW…EYETSGEGQD (154 aa). Phosphoserine occurs at positions 61, 119, and 132. Positions 127-143 are enriched in basic and acidic residues; that stretch reads KVEDRSPPDSHRAQRAD. At Thr-148 the chain carries Phosphothreonine. At Ser-149 the chain carries Phosphoserine. His-264 (nucleophile) is an active-site residue. Lys-266 is a binding site for substrate. The segment at 401–404 is interaction with DNA; it reads SIGS. The active-site Proton donor/acceptor is the His-494. Lys-496 is a substrate binding site.

The protein belongs to the tyrosyl-DNA phosphodiesterase family. As to quaternary structure, monomer.

It is found in the nucleus. The protein resides in the cytoplasm. Functionally, DNA repair enzyme that can remove a variety of covalent adducts from DNA through hydrolysis of a 3'-phosphodiester bond, giving rise to DNA with a free 3' phosphate. Catalyzes the hydrolysis of dead-end complexes between DNA and the topoisomerase I active site tyrosine residue. Hydrolyzes 3'-phosphoglycolates on protruding 3' ends on DNA double-strand breaks due to DNA damage by radiation and free radicals. Acts on blunt-ended double-strand DNA breaks and on single-stranded DNA. Has low 3'exonuclease activity and can remove a single nucleoside from the 3'end of DNA and RNA molecules with 3'hydroxyl groups. Has no exonuclease activity towards DNA or RNA with a 3'phosphate. The chain is Tyrosyl-DNA phosphodiesterase 1 (Tdp1) from Rattus norvegicus (Rat).